We begin with the raw amino-acid sequence, 556 residues long: Glutamine--tRNA ligase (556 aa).

The 'HIGH' region signature appears at 35 to 45; the sequence is PEPNGYLHIGH. ATP is bound by residues 36–38 and 42–48; these read EPN and HIGHAKS. L-glutamine is bound by residues Asp68 and Tyr213. Residues Thr232 and 262–263 contribute to the ATP site; that span reads RL. Positions 269 to 273 match the 'KMSKS' region motif; that stretch reads VTSKR.

This sequence belongs to the class-I aminoacyl-tRNA synthetase family. As to quaternary structure, monomer.

The protein localises to the cytoplasm. The catalysed reaction is tRNA(Gln) + L-glutamine + ATP = L-glutaminyl-tRNA(Gln) + AMP + diphosphate. This Pseudomonas aeruginosa (strain LESB58) protein is Glutamine--tRNA ligase.